The chain runs to 281 residues: Pantothenate synthetase (281 aa).

ATP is bound at residue 30–37 (MGNLHQGH). Catalysis depends on His37, which acts as the Proton donor. Gln61 contributes to the (R)-pantoate binding site. Gln61 serves as a coordination point for beta-alanine. 148 to 151 (GQKD) provides a ligand contact to ATP. Position 154 (Gln154) interacts with (R)-pantoate. ATP contacts are provided by residues Ala177 and 185–188 (LSSR).

Belongs to the pantothenate synthetase family. In terms of assembly, homodimer.

The protein resides in the cytoplasm. The enzyme catalyses (R)-pantoate + beta-alanine + ATP = (R)-pantothenate + AMP + diphosphate + H(+). The protein operates within cofactor biosynthesis; (R)-pantothenate biosynthesis; (R)-pantothenate from (R)-pantoate and beta-alanine: step 1/1. Functionally, catalyzes the condensation of pantoate with beta-alanine in an ATP-dependent reaction via a pantoyl-adenylate intermediate. This is Pantothenate synthetase from Acinetobacter baylyi (strain ATCC 33305 / BD413 / ADP1).